The chain runs to 434 residues: Beta-phenylalanine transaminase (434 aa).

Arg-41 is a binding site for (S)-3-amino-3-phenylpropanoate. 132 to 133 (GT) is a binding site for pyridoxal 5'-phosphate. N6-(pyridoxal phosphate)lysine is present on Lys-267. Thr-300 contacts pyridoxal 5'-phosphate.

It belongs to the class-III pyridoxal-phosphate-dependent aminotransferase family. As to quaternary structure, homodimer. Requires pyridoxal 5'-phosphate as cofactor.

It catalyses the reaction (S)-3-amino-3-phenylpropanoate + 2-oxoglutarate = 3-oxo-3-phenylpropanoate + L-glutamate. The enzyme catalyses (S)-3-amino-3-phenylpropanoate + pyruvate = 3-oxo-3-phenylpropanoate + L-alanine. With respect to regulation, is inhibited by 2-aminooxyacetate (AOA), a mimic of beta-alanine and a known inhibitor of aminotransferases. In terms of biological role, aminotransferase that acts exclusively on beta-amino acids and exhibits a broad substrate range in vitro, accepting meta-, para- and, to a lesser extent, ortho-substituted beta-phenylalanine derivatives as amino donors, and 2-oxoglutarate or pyruvate as amino acceptors. Is highly enantioselective toward (S)-beta-phenylalanine (is not active with (R)-beta-phenylalanine) and derivatives with different substituents on the phenyl ring, allowing the kinetic resolution of various racemic beta-amino acids to yield (R)-beta-amino acids with &gt;95% enantiomeric excess (ee). Highly prefers aromatic beta-amino acids over aliphatic beta-amino acids; cannot use beta-alanine or beta-glutamate as substrate. Is likely involved in the beta-phenylalanine degradation pathway that allows V.paradoxus strain CBF3 to use beta-phenylalanine as a sole nitrogen source. The sequence is that of Beta-phenylalanine transaminase from Variovorax paradoxus.